Consider the following 858-residue polypeptide: MGKKRIYELAKELNVPSKQLIAQAQQLGFSVKNHMSTLGDSEARQLQGTTTVTHPKSQPAPAKTSRATQAVAKNVTRTANQQQSNSRHQQSGDYLNNNRNNNQNNSQSRNSNGNRSNNGGNRTNSNNGNRSANASRSNSARNNGGSNTNRSNNNNNNNRSNNNNRSNTSNNRTNSTGNRTNNGGQNRNNNRTTTNNNNNNSNRSNGSNNSSRNGSGRFGGSLNSNNNGGGRYRGGNNNNRRRNNRNNKSRNNKNQRIRQVNNKPAPVRKDKPLPETLVYTVGMNAQDLGKLLHREPAEIIKKLFMLGVAVNQNQSLDKDTIEILATDYGINAQEKVQVDVTDLDKFFDDEVNNTDNLAPRAPVVTVMGHVDHGKTTLLDQLRHTHVTEGEAGGITQAIGAYQVKHDGKVITFLDTPGHAAFTEMRARGADITDITVLVVAADDGVMPQTIEAINHAKAAKVPIIVAVNKIDKPGANPNHVMEQLTEYGLIPEDWGGDTIFVQISAKFGKNLDELLDMILLQSEVLELTANPKQNAAGSVLEASLDRGKGSTATLLVQQGTMHVGDPIVVGNTYGKVRTMTNDHGKRIKEAVPSTPIEITGLNDVPDAGDRFVVFDDEKTARDAGEQRAKQALMEERKQTAHVTLDNLFDSMKQGELKEVDVIIKADVQGSVEALAGSLRKIDVEGVRVNIIHTAVGAINESDVALAEASNAIIIGFNVRPTPQAKAQADTDDVDIRLHQVIYNAIDEIESAMKGMLEPTYKEEITGQAEIREIYKVSKIGTIGGGMVTDGVIHRDSGVRVIRDGVVIYDGKLASLRRFKDDVKEVKQGFELGLRIEDYNDIKVNDVIEAYVMKEVPVE.

A disordered region spans residues 49 to 271 (TTTVTHPKSQ…NKPAPVRKDK (223 aa)). A compositionally biased stretch (low complexity) spans 80 to 226 (NQQQSNSRHQ…RFGGSLNSNN (147 aa)). Basic residues predominate over residues 239–256 (NRRRNNRNNKSRNNKNQR). One can recognise a tr-type G domain in the interval 359–528 (PRAPVVTVMG…LLQSEVLELT (170 aa)). The interval 368–375 (GHVDHGKT) is G1. Position 368 to 375 (368 to 375 (GHVDHGKT)) interacts with GTP. The segment at 393–397 (GITQA) is G2. The segment at 414–417 (DTPG) is G3. Residues 414 to 418 (DTPGH) and 468 to 471 (NKID) contribute to the GTP site. The segment at 468 to 471 (NKID) is G4. The interval 504–506 (SAK) is G5.

It belongs to the TRAFAC class translation factor GTPase superfamily. Classic translation factor GTPase family. IF-2 subfamily.

It localises to the cytoplasm. Functionally, one of the essential components for the initiation of protein synthesis. Protects formylmethionyl-tRNA from spontaneous hydrolysis and promotes its binding to the 30S ribosomal subunits. Also involved in the hydrolysis of GTP during the formation of the 70S ribosomal complex. The sequence is that of Translation initiation factor IF-2 from Lactiplantibacillus plantarum (strain ATCC BAA-793 / NCIMB 8826 / WCFS1) (Lactobacillus plantarum).